The primary structure comprises 575 residues: Transport inhibitor response 1-like protein Os04g0395600 (575 aa).

An F-box domain is found at methionine 1–valine 45. Lysine 69 contacts 1D-myo-inositol hexakisphosphate. An interaction with auxin-responsive proteins region spans residues aspartate 76–phenylalanine 77. 1D-myo-inositol hexakisphosphate-binding positions include lysine 108–arginine 109 and arginine 340. Residues proline 343 to valine 348 are interaction with auxin-responsive proteins. Residue arginine 396–arginine 398 coordinates 1D-myo-inositol hexakisphosphate. The tract at residues cysteine 400–proline 404 is interaction with auxin-responsive proteins. A 1D-myo-inositol hexakisphosphate-binding site is contributed by arginine 431. The interval alanine 459–phenylalanine 460 is interaction with auxin-responsive proteins. 1D-myo-inositol hexakisphosphate contacts are provided by residues arginine 479–lysine 480 and arginine 504.

As to quaternary structure, part of a SCF (SKP1-cullin-F-box) protein ligase complex. May interact with auxin and auxin-responsive proteins.

The protein localises to the nucleus. The protein operates within protein modification; protein ubiquitination. The polypeptide is Transport inhibitor response 1-like protein Os04g0395600 (Oryza sativa subsp. japonica (Rice)).